The primary structure comprises 362 residues: Protein RecA (362 aa).

77-84 (GPESSGKT) contributes to the ATP binding site.

This sequence belongs to the RecA family.

Its subcellular location is the cytoplasm. Can catalyze the hydrolysis of ATP in the presence of single-stranded DNA, the ATP-dependent uptake of single-stranded DNA by duplex DNA, and the ATP-dependent hybridization of homologous single-stranded DNAs. It interacts with LexA causing its activation and leading to its autocatalytic cleavage. This chain is Protein RecA, found in Nitrobacter winogradskyi (strain ATCC 25391 / DSM 10237 / CIP 104748 / NCIMB 11846 / Nb-255).